Here is a 390-residue protein sequence, read N- to C-terminus: MQIHPLITDSATLAALCSRLSRADFIAIDTEFIRENSYWPELCLIQIADDKEAAAIDPLAPGLDMTPLTDLLVNNEDILKVFHAGGQDLEIILHHTGKMPFPLFDTQIAAMALGVGEQVGYSNLVERYLSIKLDKGARFTDWSHRPLDRRQLDYAIADVTHLATLFPMLLKELRDKGRGAWLDQEMERLADPSQYINDPEKSWLRIRMPNRKADILGRLKALAAWREIEAQNRNIPRGRIAKDETLADLAIHPPRRQSDLVKVRGLSGSWGSNDIGQRLMEAIENAEALRPEEIPQRNDRKLCIGKDGAMIADLLKLLLKMRARDAEVAARLIAKSDDIEGIIAGERENNPVLTGWRYDIFGKEAIALIEGKMAFSVQKGKIAMTLIEKE.

The 3'-5' exonuclease domain occupies 7–173 (ITDSATLAAL…TLFPMLLKEL (167 aa)). Residues 212–293 (KADILGRLKA…ENAEALRPEE (82 aa)) form the HRDC domain.

This sequence belongs to the RNase D family. Requires a divalent metal cation as cofactor.

The protein localises to the cytoplasm. The catalysed reaction is Exonucleolytic cleavage that removes extra residues from the 3'-terminus of tRNA to produce 5'-mononucleotides.. In terms of biological role, exonuclease involved in the 3' processing of various precursor tRNAs. Initiates hydrolysis at the 3'-terminus of an RNA molecule and releases 5'-mononucleotides. This Zymomonas mobilis subsp. mobilis (strain ATCC 31821 / ZM4 / CP4) protein is Ribonuclease D.